Consider the following 182-residue polypeptide: ATP synthase subunit delta (182 aa).

The protein belongs to the ATPase delta chain family. F-type ATPases have 2 components, F(1) - the catalytic core - and F(0) - the membrane proton channel. F(1) has five subunits: alpha(3), beta(3), gamma(1), delta(1), epsilon(1). F(0) has three main subunits: a(1), b(2) and c(10-14). The alpha and beta chains form an alternating ring which encloses part of the gamma chain. F(1) is attached to F(0) by a central stalk formed by the gamma and epsilon chains, while a peripheral stalk is formed by the delta and b chains.

The protein resides in the cell inner membrane. F(1)F(0) ATP synthase produces ATP from ADP in the presence of a proton or sodium gradient. F-type ATPases consist of two structural domains, F(1) containing the extramembraneous catalytic core and F(0) containing the membrane proton channel, linked together by a central stalk and a peripheral stalk. During catalysis, ATP synthesis in the catalytic domain of F(1) is coupled via a rotary mechanism of the central stalk subunits to proton translocation. Its function is as follows. This protein is part of the stalk that links CF(0) to CF(1). It either transmits conformational changes from CF(0) to CF(1) or is implicated in proton conduction. This Histophilus somni (strain 2336) (Haemophilus somnus) protein is ATP synthase subunit delta.